The primary structure comprises 84 residues: M-myrmeciitoxin-Mb2a (84 aa).

Positions Met-1 to Ala-21 are cleaved as a signal peptide. Residues Pro-22 to Pro-48 constitute a propeptide that is removed on maturation.

The protein belongs to the formicidae venom precursor-01 superfamily. Ant pilosulin family. As to expression, expressed by the venom gland.

It localises to the secreted. Functionally, shows activity against E.coli and S.aureus (MIC&lt;6.25 uM), moderate activity against P.aeruginosa (MIC&lt;25 uM), weak activity against B.subtilis (MIC&lt;50 uM), and has no effect against L.garvieae, C.albicans, and S.cerevisiae. Has no hemolytic nor cytolytic activity. Causes an IgE-independent histamine release. This Myrmecia banksi (Jack jumper ant) protein is M-myrmeciitoxin-Mb2a.